The primary structure comprises 159 residues: MTIEPRATADLVDDIGPDVRSCDLQLRQFGRRPEFAGRVTTVRCFQDNALLKSVLSEPGDGGVLVIDGDGSLHTALVGDVIAALGRDNGWSGLIINGAVRDASTLRTLDIGIKALGTNPRKSTKTGAGERDVPVDFGGVTFTPGDVAYSDDDGIVVVTP.

Substrate is bound by residues 78-81 (GDVI) and Arg-100. Residue Asp-101 coordinates a divalent metal cation.

This sequence belongs to the class II aldolase/RraA-like family. Homotrimer. It depends on a divalent metal cation as a cofactor.

The enzyme catalyses 4-hydroxy-4-methyl-2-oxoglutarate = 2 pyruvate. It catalyses the reaction oxaloacetate + H(+) = pyruvate + CO2. Catalyzes the aldol cleavage of 4-hydroxy-4-methyl-2-oxoglutarate (HMG) into 2 molecules of pyruvate. Also contains a secondary oxaloacetate (OAA) decarboxylase activity due to the common pyruvate enolate transition state formed following C-C bond cleavage in the retro-aldol and decarboxylation reactions. The polypeptide is Putative 4-hydroxy-4-methyl-2-oxoglutarate aldolase (Mycobacterium sp. (strain KMS)).